Reading from the N-terminus, the 475-residue chain is ATP synthase subunit beta, chloroplastic (475 aa).

155 to 162 lines the ATP pocket; that stretch reads GGAGVGKT.

Belongs to the ATPase alpha/beta chains family. F-type ATPases have 2 components, CF(1) - the catalytic core - and CF(0) - the membrane proton channel. CF(1) has five subunits: alpha(3), beta(3), gamma(1), delta(1), epsilon(1). CF(0) has four main subunits: a(1), b(1), b'(1) and c(9-12).

Its subcellular location is the plastid. It is found in the chloroplast thylakoid membrane. It carries out the reaction ATP + H2O + 4 H(+)(in) = ADP + phosphate + 5 H(+)(out). Produces ATP from ADP in the presence of a proton gradient across the membrane. The catalytic sites are hosted primarily by the beta subunits. This chain is ATP synthase subunit beta, chloroplastic, found in Guillardia theta (Cryptophyte).